The following is a 239-amino-acid chain: Ribosomal RNA small subunit methyltransferase G (239 aa).

S-adenosyl-L-methionine contacts are provided by residues Gly77, Phe82, 128–129 (AE), and Arg146. The tract at residues 215–239 (DKKRQTPKKYPRKPGTPNKTPLLEK) is disordered.

The protein belongs to the methyltransferase superfamily. RNA methyltransferase RsmG family.

Its subcellular location is the cytoplasm. In terms of biological role, specifically methylates the N7 position of guanine in position 535 of 16S rRNA. The protein is Ribosomal RNA small subunit methyltransferase G of Staphylococcus aureus (strain USA300).